The primary structure comprises 312 residues: Malate dehydrogenase (312 aa).

NAD(+) contacts are provided by residues 7-13 and Asp-34; that span reads GAAGGIG. 2 residues coordinate substrate: Arg-81 and Arg-87. Residues Asn-94 and 117–119 contribute to the NAD(+) site; that span reads ITN. Residues Asn-119 and Arg-153 each contribute to the substrate site. Residue His-177 is the Proton acceptor of the active site. Met-227 lines the NAD(+) pocket.

Belongs to the LDH/MDH superfamily. MDH type 1 family. As to quaternary structure, homodimer.

The catalysed reaction is (S)-malate + NAD(+) = oxaloacetate + NADH + H(+). Functionally, catalyzes the reversible oxidation of malate to oxaloacetate. The chain is Malate dehydrogenase from Escherichia coli (strain 55989 / EAEC).